Reading from the N-terminus, the 477-residue chain is Mitochondrial adenyl nucleotide antiporter SLC25A24 (477 aa).

The tract at residues 1-174 is regulatory N-terminal domain; that stretch reads MHQLIRKFVF…RYWKKSTVLD (174 aa). The Mitochondrial intermembrane portion of the chain corresponds to 1–198; it reads MHQLIRKFVF…EKTTGMWWKQ (198 aa). Positions 20 to 55 constitute an EF-hand 1 domain; that stretch reads DNTKSFAELFEKLDVNKDGKVDVSELKTGLAAMGFS. Residues D33, N35, D37, K39, E44, D69, D71, D73, E80, D100, N102, D104, R106, E111, D136, D138, T140, T142, and E147 each coordinate Ca(2+). 2 EF-hand domains span residues 87–122 and 123–158; these read EHEKKLRLTFKSLDKNEDGRVDAKEIQQSLKDLGIN and LSDKDAEKILHSIDVDGTMTLDWNEWREHFLFNPAE. The interval 160-169 is linker region; the sequence is LQQIIRYWKK. The segment at 175-477 is C-terminal transmembrane transporter domain; that stretch reads IGDSLTIPDE…YMRSGLGISK (303 aa). Solcar repeat units follow at residues 193 to 279, 287 to 372, and 384 to 472; these read GMWW…YKKL, VQSH…LKNT, and PGVL…MRSG. The chain crosses the membrane as a helical span at residues 199-216; sequence LAAGGVAGAVSRTGTAPL. Residues 217 to 253 lie on the Mitochondrial matrix side of the membrane; the sequence is DRMKVFMQVHSSKTNKISLVNGFKQMIKEGGVASLWR. A helical membrane pass occupies residues 254–273; sequence GNGVNVIKIAPETAIKFMAY. Residues 274–296 lie on the Mitochondrial intermembrane side of the membrane; it reads EQYKKLLSKDGGKVQSHERFMAG. Residues 297 to 310 form a helical membrane-spanning segment; it reads SLAGATAQTAIYPM. The Mitochondrial matrix portion of the chain corresponds to 311 to 346; that stretch reads EVMKTRLTLRKTGQYSGMFDCAKKILRKEGVKAFYK. The helical transmembrane segment at 347–366 threads the bilayer; sequence GYVPNILGIIPYAGIDLAVY. The Mitochondrial intermembrane portion of the chain corresponds to 367-389; it reads ETLKNTWLSHYAKDTANPGVLVL. A helical transmembrane segment spans residues 390-407; sequence LGCGTISSTCGQLASYPL. The Mitochondrial matrix portion of the chain corresponds to 408–446; the sequence is ALIRTRMQAMASMEGSEQVSMSKLVKKIMQKEGFFGLYR. Residues 447–466 form a helical membrane-spanning segment; the sequence is GILPNFMKVIPAVSISYVVY. The Mitochondrial intermembrane segment spans residues 467–477; the sequence is EYMRSGLGISK.

It belongs to the mitochondrial carrier (TC 2.A.29) family. As to quaternary structure, monomer.

It is found in the mitochondrion inner membrane. It catalyses the reaction Mg(2+)(out) + phosphate(in) + ATP(out) = Mg(2+)(in) + phosphate(out) + ATP(in). The catalysed reaction is ADP(out) + phosphate(in) + H(+)(out) = ADP(in) + phosphate(out) + H(+)(in). The enzyme catalyses AMP(out) + phosphate(in) = AMP(in) + phosphate(out). It carries out the reaction phosphate(in) + ATP(out) + 2 H(+)(out) = phosphate(out) + ATP(in) + 2 H(+)(in). It catalyses the reaction dADP(in) + ADP(out) = dADP(out) + ADP(in). The catalysed reaction is Mg(2+)(in) + ADP(out) + ATP(in) + H(+)(out) = Mg(2+)(out) + ADP(in) + ATP(out) + H(+)(in). The enzyme catalyses ADP(out) + diphosphate(in) = ADP(in) + diphosphate(out). It carries out the reaction dAMP(in) + ADP(out) + H(+)(out) = dAMP(out) + ADP(in) + H(+)(in). It catalyses the reaction 3'-AMP(in) + ADP(out) + H(+)(out) = 3'-AMP(out) + ADP(in) + H(+)(in). The catalysed reaction is dAMP(out) + phosphate(in) = dAMP(in) + phosphate(out). The enzyme catalyses 3'-AMP(out) + phosphate(in) = 3'-AMP(in) + phosphate(out). It carries out the reaction dADP(out) + phosphate(in) + H(+)(out) = dADP(in) + phosphate(out) + H(+)(in). Activated by an increase in cytosolic calcium levels that induce a conformational change of the N-terminal regulatory domain, uncapping the channel and allowing transport. Inhibited by bathophenanthroline, mersalyl, p-hydroxymercuribenzoate, bromcresol purple and tannic acid. In terms of biological role, electroneutral antiporter that mediates the transport of adenyl nucleotides through the inner mitochondrial membrane. Originally identified as an ATP-magnesium/inorganic phosphate antiporter, it also acts as a broad specificity adenyl nucleotide antiporter. By regulating the mitochondrial matrix adenyl nucleotide pool could adapt to changing cellular energetic demands and indirectly regulate adenyl nucleotide-dependent metabolic pathways. This chain is Mitochondrial adenyl nucleotide antiporter SLC25A24 (slc25a24), found in Danio rerio (Zebrafish).